The following is a 167-amino-acid chain: Peptide deformylase (167 aa).

Cys91 and His133 together coordinate Fe cation. The active site involves Glu134. His137 is a binding site for Fe cation.

Belongs to the polypeptide deformylase family. Requires Fe(2+) as cofactor.

The enzyme catalyses N-terminal N-formyl-L-methionyl-[peptide] + H2O = N-terminal L-methionyl-[peptide] + formate. In terms of biological role, removes the formyl group from the N-terminal Met of newly synthesized proteins. Requires at least a dipeptide for an efficient rate of reaction. N-terminal L-methionine is a prerequisite for activity but the enzyme has broad specificity at other positions. This is Peptide deformylase from Buchnera aphidicola subsp. Schizaphis graminum (strain Sg).